The primary structure comprises 96 residues: Protein Vpr (96 aa).

A homooligomerization region spans residues 1–42 (MEQAPGDQGPQREPYNEWALEILEELKNEAVRHFPRPWLHGL). Residues S79, S94, and S96 each carry the phosphoserine; by host modification.

It belongs to the HIV-1 VPR protein family. Homooligomer, may form homodimer. Interacts with p6-gag region of the Pr55 Gag precursor protein through a (Leu-X-X)4 motif near the C-terminus of the P6gag protein. Interacts with host UNG. May interact with host RAD23A/HHR23A. Interacts with host VPRBP/DCAF1, leading to hijack the CUL4A-RBX1-DDB1-DCAF1/VPRBP complex, mediating ubiquitination of host proteins such as TERT and ZGPAT and arrest of the cell cycle in G2 phase. In terms of processing, phosphorylated on several residues by host. These phosphorylations regulate VPR activity for the nuclear import of the HIV-1 pre-integration complex.

The protein resides in the virion. Its subcellular location is the host nucleus. It is found in the host extracellular space. Its function is as follows. During virus replication, may deplete host UNG protein, and incude G2-M cell cycle arrest. Acts by targeting specific host proteins for degradation by the 26S proteasome, through association with the cellular CUL4A-DDB1 E3 ligase complex by direct interaction with host VPRPB/DCAF-1. Cell cycle arrest reportedly occurs within hours of infection and is not blocked by antiviral agents, suggesting that it is initiated by the VPR carried into the virion. Additionally, VPR induces apoptosis in a cell cycle dependent manner suggesting that these two effects are mechanistically linked. Detected in the serum and cerebrospinal fluid of AIDS patient, VPR may also induce cell death to bystander cells. Functionally, during virus entry, plays a role in the transport of the viral pre-integration (PIC) complex to the host nucleus. This function is crucial for viral infection of non-dividing macrophages. May act directly at the nuclear pore complex, by binding nucleoporins phenylalanine-glycine (FG)-repeat regions. In Human immunodeficiency virus type 1 group M subtype F1 (isolate VI850) (HIV-1), this protein is Protein Vpr.